The primary structure comprises 591 residues: Formate--tetrahydrofolate ligase (591 aa).

74–81 contacts ATP; sequence TPLGEGKS.

This sequence belongs to the formate--tetrahydrofolate ligase family.

It carries out the reaction (6S)-5,6,7,8-tetrahydrofolate + formate + ATP = (6R)-10-formyltetrahydrofolate + ADP + phosphate. It participates in one-carbon metabolism; tetrahydrofolate interconversion. In Desulfovibrio desulfuricans (strain ATCC 27774 / DSM 6949 / MB), this protein is Formate--tetrahydrofolate ligase.